A 331-amino-acid chain; its full sequence is Tyrosine recombinase XerD (331 aa).

The region spanning 8–93 is the Core-binding (CB) domain; sequence GRDGARLESF…SMRQFYRFLY (86 aa). The Tyr recombinase domain occupies 114–318; it reads ALPKTMSVAD…LEERLQELVQ (205 aa). Active-site residues include R161 and K185. A compositionally biased stretch (basic and acidic residues) spans 214 to 228; that stretch reads QEKSKAAASQKKTDT. The interval 214 to 239 is disordered; sequence QEKSKAAASQKKTDTAESPWLFPSNS. Active-site residues include H270, R273, and H296. Y305 serves as the catalytic O-(3'-phospho-DNA)-tyrosine intermediate.

It belongs to the 'phage' integrase family. XerD subfamily. Forms a cyclic heterotetrameric complex composed of two molecules of XerC and two molecules of XerD.

The protein localises to the cytoplasm. Functionally, site-specific tyrosine recombinase, which acts by catalyzing the cutting and rejoining of the recombining DNA molecules. The XerC-XerD complex is essential to convert dimers of the bacterial chromosome into monomers to permit their segregation at cell division. It also contributes to the segregational stability of plasmids. The sequence is that of Tyrosine recombinase XerD from Agrobacterium fabrum (strain C58 / ATCC 33970) (Agrobacterium tumefaciens (strain C58)).